A 108-amino-acid chain; its full sequence is Large ribosomal subunit protein uL24 (108 aa).

Belongs to the universal ribosomal protein uL24 family. As to quaternary structure, part of the 50S ribosomal subunit.

One of two assembly initiator proteins, it binds directly to the 5'-end of the 23S rRNA, where it nucleates assembly of the 50S subunit. In terms of biological role, one of the proteins that surrounds the polypeptide exit tunnel on the outside of the subunit. This chain is Large ribosomal subunit protein uL24, found in Geotalea daltonii (strain DSM 22248 / JCM 15807 / FRC-32) (Geobacter daltonii).